The following is a 242-amino-acid chain: Uridylate kinase (242 aa).

16–19 (KISG) provides a ligand contact to ATP. The segment at 24–29 (GDQGFG) is involved in allosteric activation by GTP. Residue Gly-58 participates in UMP binding. Residues Gly-59 and Arg-63 each contribute to the ATP site. Residues Asp-78 and 139-146 (TGNPYFTT) each bind UMP. Residues Thr-166, Tyr-172, and Asp-175 each coordinate ATP.

It belongs to the UMP kinase family. In terms of assembly, homohexamer.

It is found in the cytoplasm. It catalyses the reaction UMP + ATP = UDP + ADP. Its pathway is pyrimidine metabolism; CTP biosynthesis via de novo pathway; UDP from UMP (UMPK route): step 1/1. With respect to regulation, allosterically activated by GTP. Inhibited by UTP. In terms of biological role, catalyzes the reversible phosphorylation of UMP to UDP. This is Uridylate kinase from Roseobacter denitrificans (strain ATCC 33942 / OCh 114) (Erythrobacter sp. (strain OCh 114)).